Reading from the N-terminus, the 607-residue chain is Chaperone protein DnaK (607 aa).

Thr174 carries the phosphothreonine; by autocatalysis modification. Positions 577-594 are enriched in polar residues; the sequence is QSAGSTAGNPGQGQSTEN. Residues 577–607 form a disordered region; that stretch reads QSAGSTAGNPGQGQSTENPGGKTIDGDYKVN.

The protein belongs to the heat shock protein 70 family.

In terms of biological role, acts as a chaperone. In Dictyoglomus turgidum (strain DSM 6724 / Z-1310), this protein is Chaperone protein DnaK.